The sequence spans 67 residues: Phycobilisome 7.8 kDa linker polypeptide, allophycocyanin-associated, core (67 aa).

One can recognise a CpcD-like domain in the interval Gly-1–Ala-56.

Belongs to the phycobilisome linker protein family.

The protein resides in the cellular thylakoid membrane. In terms of biological role, rod linker protein, associated with allophycocyanin. Linker polypeptides determine the state of aggregation and the location of the disk-shaped phycobiliprotein units within the phycobilisome and modulate their spectroscopic properties in order to mediate a directed and optimal energy transfer. The sequence is that of Phycobilisome 7.8 kDa linker polypeptide, allophycocyanin-associated, core (apcC) from Mastigocladus laminosus (Fischerella sp.).